A 131-amino-acid polypeptide reads, in one-letter code: ATP synthase epsilon chain (131 aa).

The protein belongs to the ATPase epsilon chain family. F-type ATPases have 2 components, CF(1) - the catalytic core - and CF(0) - the membrane proton channel. CF(1) has five subunits: alpha(3), beta(3), gamma(1), delta(1), epsilon(1). CF(0) has three main subunits: a, b and c.

Its subcellular location is the cell membrane. In terms of biological role, produces ATP from ADP in the presence of a proton gradient across the membrane. In Bacillus licheniformis (strain ATCC 14580 / DSM 13 / JCM 2505 / CCUG 7422 / NBRC 12200 / NCIMB 9375 / NCTC 10341 / NRRL NRS-1264 / Gibson 46), this protein is ATP synthase epsilon chain.